The sequence spans 88 residues: Exodeoxyribonuclease 7 small subunit (88 aa).

Residues 69–88 (DPMHPDDGEPFDPSLVSTSQ) are disordered.

This sequence belongs to the XseB family. In terms of assembly, heterooligomer composed of large and small subunits.

The protein localises to the cytoplasm. The enzyme catalyses Exonucleolytic cleavage in either 5'- to 3'- or 3'- to 5'-direction to yield nucleoside 5'-phosphates.. Its function is as follows. Bidirectionally degrades single-stranded DNA into large acid-insoluble oligonucleotides, which are then degraded further into small acid-soluble oligonucleotides. The sequence is that of Exodeoxyribonuclease 7 small subunit from Xylella fastidiosa (strain M23).